A 356-amino-acid chain; its full sequence is Altered inheritance of mitochondria protein 23, mitochondrial (356 aa).

The transit peptide at 1–32 directs the protein to the mitochondrion; that stretch reads MLKVPLSDVLSQKMLFLKSFRYFHCTKYFSRD.

The protein belongs to the AIM23 family.

It is found in the mitochondrion. This is Altered inheritance of mitochondria protein 23, mitochondrial (AIM23) from Saccharomyces cerevisiae (strain YJM789) (Baker's yeast).